The chain runs to 951 residues: MGESSNVHEKSQAFYGPNLGYIIELYEQYLEDPSSVDEETRRYFDEFGAPETSTPTEVPVSGPSFDLEKVVSATRLINDIRAFGHKAADIYPLKDHPREQELFELSRYDLTEEDLKQIPARLLSDDAPKPNASALELFRHLLDVYTGTVAIELRHLDDMEEKKWIRRQVEQGALQQTFSKEEKIELFKRLAETELFESFLHKTYVGQKRFSIEGLDAMVPLLDAMVGGLISSGSEHINIGMAHRGRLNVLAHVLGKPYEMIFAEFQHAPNKELIPSEGSIGINFGWSGDVKYHLGLDRKVVEQQKEVRLNLANNPSHLEFVGSVVEGYTRAAQDDRSEKGSAVQHDDLAASILIHGDAAFPGQGIVAETLNMTNLTGYRTGGTVHVIANNTIGFTTDPNDSRSTRYASDIAKGYEIPVFHVNADDPEACVAVAKLISEYRAKFHKDILVDLIGYRRYGHNEMDEPMNTNPVLYKAIKGHQSVRHVYAARLEEEGVMTKDEKAQIEQKIEEALKAARDLVPSEEEDADIVLPDAVHKGFPKVDTSVEREFLTQLNEELLNWPEGFGVFHKLQKVLDRRRDAFSEGGKIDWGHAETLAFASILSDGTPVRLSGQDSERGTFAQRNIMLNDVESGKKFSPLHELSTAKASFSVYNSPLSEGSVLGFEYGYNVFAQDTLVLWEAQYGDFANSAQVMFDQFISAGRAKWGQKSGLVMLLPHGYEGQGPEHSSARMERYLTLAGEKNWTVANLSSAAQYFHILRRQAEMLGKEEIRPMIIMTPKSLLRHPLATSPVEAFTEESFKPIVEQPGLGENTEKVERLVFCTGKMAIDLAEAVGKSEESLDFLHIVRVEEIYPFPVREIRDVISRYPNAREIVWVQEEPKNMGAWTYIEPRLEAVTTNRLDVRYIGRRRRSSPAEGNPTAHKQEQARIIREALSRDVVSSGAGTSTYQKDRK.

The tract at residues 906–925 (RRRRSSPAEGNPTAHKQEQA) is disordered.

Belongs to the alpha-ketoglutarate dehydrogenase family. Homodimer. Part of the 2-oxoglutarate dehydrogenase (OGDH) complex composed of E1 (2-oxoglutarate dehydrogenase), E2 (dihydrolipoamide succinyltransferase) and E3 (dihydrolipoamide dehydrogenase); the complex contains multiple copies of the three enzymatic components (E1, E2 and E3). Thiamine diphosphate serves as cofactor.

The enzyme catalyses N(6)-[(R)-lipoyl]-L-lysyl-[protein] + 2-oxoglutarate + H(+) = N(6)-[(R)-S(8)-succinyldihydrolipoyl]-L-lysyl-[protein] + CO2. E1 component of the 2-oxoglutarate dehydrogenase (OGDH) complex which catalyzes the decarboxylation of 2-oxoglutarate, the first step in the conversion of 2-oxoglutarate to succinyl-CoA and CO(2). This is 2-oxoglutarate dehydrogenase E1 component from Exiguobacterium sp. (strain ATCC BAA-1283 / AT1b).